A 101-amino-acid polypeptide reads, in one-letter code: Small ribosomal subunit protein uS14 (101 aa).

This sequence belongs to the universal ribosomal protein uS14 family. As to quaternary structure, part of the 30S ribosomal subunit. Contacts proteins S3 and S10.

Binds 16S rRNA, required for the assembly of 30S particles and may also be responsible for determining the conformation of the 16S rRNA at the A site. This Burkholderia multivorans (strain ATCC 17616 / 249) protein is Small ribosomal subunit protein uS14.